The chain runs to 1341 residues: MSLSPHVENASIPKGSTPIPKNRNVSSIGKGEFLGSSSSNNSSFRMNHYSNSGQPSVLDSIRRPNLTPTFSYSNGVYMPESHRTSSFNDSYLPYDKNPYAKTTGSMSNKSNMKIKTKKNAINTNTRKSSGLIYTTKVDKELSSIDKVNDPNINGLVCAGKTHLGLYKFSPSDRSIKCVHDFITPNSNTSTRGTTSLLPKLSKRTRQNKFSTIADVKTGFNNYKNCIAVCNNSTAISIYDLNKSSSIDNPLITSLCEHTRSINSFDFNMVESNLIISGGQDSCVKIWDLRSNKSKSSNRSDISINTASDSIRDVKWMPGYNFASKNDQGSSTYGNLKSGYKFASIHDSGYLLKFDLRQPAQYEKKLNAHTGPGLCLNWHPNQEYIATGGRDGKCCLWFVGDNANAAENTVLNYGNSPSLHAPNTSLNNSGSLAFPKLTINTGYPVTKLKFKPAYSSNIYNSLLGISSMGDEAEVRIYSLARKYIPKHVLLSETPSLGLVWWDENLIFNIDKGTRINGWDINKEPTVLENLSKNTTTWRDLDGNGLLSVDQEIGSYEVVEPELQPTSSTTCKKHPGTIKNPKNGNPENQGIIGGIKKGFSHTGLTSFTPERPPTLKAGPTFSTKSLTLASGASSFNSSSASLTSLTPQTENREEIAIEPPCIITLDIPQIFNNIRLTKIAHSRKKNVISESSSMKNSPVEKFKYLARQLKFSYIREHNVSDSADTAYKNDIENIDVVKNATETHGDNTTTTNNNDDGDDDDDDDDDDKIIESHLLKKYNFPENNTWATLMNEKVNNKKSKRNSSSSREFDEKDVRSSISSISASRQSHDRARKIDKNVEAELQEKIQTLVDLISIATHNASVYLSIDDLTNFKIWILIRDSLLWDLKWMTSSQISSDNASNMDANESSDFEAGENLKTGKEFPEEDGAGTSGAESLVEERPQAFRANSDEPSDAEKKPVSKLKEQLKNTEIIPYAQPNEDSDEVLTKLKELQNQRLESRTKMGETVSDDVIIEEDEHEHQEEEQPHDSPTKSAQFHASPIAKSIPILQKREHRKSFIDTFMLHSPNGYNGDTDIGNEDDNISPRFTYNSVSPRSKVSSLQSYATTTSQLETFKKLSSHTAPIIGSPRHAPSRPDSIGREQLSSSLTKKLAKCKKIIADPPWDTKKLIKQLYNQATETGNVVLTVNILFLFQTIYQITEIDIAKDAIAHFLLLLHRYELFGIAADVLKYCPFEDIMGSEGDQSSIRLFCERCGELITNESSKEKLRAEAQQTGNKKIMDKFGYWYCDSCKKKNTSCVLCERPLKKLTMVILPCGHEGHFQCIQEWFLDENEQECPGGCPGVAFI.

The segment at 1–39 is disordered; it reads MSLSPHVENASIPKGSTPIPKNRNVSSIGKGEFLGSSSS. WD repeat units follow at residues 207-248, 256-296, 305-342, 367-406, 439-486, and 489-527; these read NKFS…SIDN, EHTR…SKSS, TASD…YKFA, AHTG…NAAE, NTGY…IPKH, and LSET…TVLE. 5 disordered regions span residues 559–593, 600–619, 630–651, 736–765, and 789–830; these read PELQ…IGGI, TGLT…GPTF, ASSF…ENRE, KNAT…DDDD, and NEKV…DRAR. The segment covering 630–644 has biased composition (low complexity); that stretch reads ASSFNSSSASLTSLT. Positions 753 to 765 are enriched in acidic residues; sequence DDGDDDDDDDDDD. A compositionally biased stretch (low complexity) spans 814 to 823; the sequence is SSISSISASR. The WD 7 repeat unit spans residues 843–883; it reads KIQTLVDLISIATHNASVYLSIDDLTNFKIWILIRDSLLWD. Disordered regions lie at residues 941–962 and 1013–1043; these read AFRA…KLKE and DEHE…KSIP. Basic and acidic residues-rich tracts occupy residues 951–962 and 1015–1027; these read DAEKKPVSKLKE and HEHQ…HDSP. Residues serine 1036, serine 1080, serine 1087, serine 1089, serine 1123, and serine 1133 each carry the phosphoserine modification. 2 WD repeats span residues 1129 to 1169 and 1216 to 1255; these read SRPD…KQLY and LFGI…LITN. An RING-type; degenerate zinc finger spans residues 1293-1335; that stretch reads CVLCERPLKKLTMVILPCGHEGHFQCIQEWFLDENEQECPGGC.

The protein belongs to the WD repeat RTC1 family. In terms of assembly, component of the SEA complex composed of at least IML1/SEA1, RTC1/SEA2, MTC5/SEA3, NPR2, NPR3, SEA4, SEC13 and SEH1. Interacts with ribosomes.

Its subcellular location is the vacuole membrane. Its function is as follows. Component of the SEA complex which coats the vacuolar membrane and is involved in intracellular trafficking, autophagy, response to nitrogen starvation, and amino acid biogenesis. May be involved in a process influencing telomere capping. The chain is Restriction of telomere capping protein 1 (RTC1) from Saccharomyces cerevisiae (strain ATCC 204508 / S288c) (Baker's yeast).